We begin with the raw amino-acid sequence, 244 residues long: Protein IN2-1 homolog B (244 aa).

The interval 1–27 (MAAAAAAPASSEKEVLPPSLTSSSEPP) is disordered. The region spanning 32–113 (GTTRLYVAYH…YIDTNFEGPA (82 aa)) is the GST N-terminal domain. Residues V85 and 97–98 (ES) contribute to the glutathione site. Residues 118–241 (DSEKQQFAEE…FLLEHTKKRL (124 aa)) enclose the GST C-terminal domain.

The polypeptide is Protein IN2-1 homolog B (GSTZ5) (Oryza sativa subsp. indica (Rice)).